The following is an 800-amino-acid chain: Nucleolar complex protein 3 homolog (800 aa).

Residues 37–90 (STIKKYRKEQRKLRQAVKDAVSKKPFPLEDPKSKRPVKGMEREEEDEEDQALPL) form a disordered region. Residues 40-51 (KKYRKEQRKLRQ) show a composition bias toward basic residues. Positions 52 to 77 (AVKDAVSKKPFPLEDPKSKRPVKGME) are enriched in basic and acidic residues. Residues 78–90 (REEEDEEDQALPL) show a composition bias toward acidic residues. K333 is covalently cross-linked (Glycyl lysine isopeptide (Lys-Gly) (interchain with G-Cter in SUMO2)). A coiled-coil region spans residues 450–489 (FKEKRKTLSRMQRKWKKAEEKLERELREAEASESTERKLK).

The protein belongs to the CBF/MAK21 family.

It localises to the nucleus. The protein localises to the nucleolus. The sequence is that of Nucleolar complex protein 3 homolog (NOC3L) from Cricetulus griseus (Chinese hamster).